A 418-amino-acid polypeptide reads, in one-letter code: Gamma-glutamyl phosphate reductase (418 aa).

The protein belongs to the gamma-glutamyl phosphate reductase family.

Its subcellular location is the cytoplasm. The catalysed reaction is L-glutamate 5-semialdehyde + phosphate + NADP(+) = L-glutamyl 5-phosphate + NADPH + H(+). Its pathway is amino-acid biosynthesis; L-proline biosynthesis; L-glutamate 5-semialdehyde from L-glutamate: step 2/2. Its function is as follows. Catalyzes the NADPH-dependent reduction of L-glutamate 5-phosphate into L-glutamate 5-semialdehyde and phosphate. The product spontaneously undergoes cyclization to form 1-pyrroline-5-carboxylate. This chain is Gamma-glutamyl phosphate reductase, found in Geobacter sp. (strain M21).